Consider the following 407-residue polypeptide: MFSKIIQSYAKGNLIVQICIGIVLGILIGISSKEISEIANLLGILFTSALKAIAPMLVFILILTSICTKDFSQSGAKIKNIIILYIVGTFLASACAVLANFFFPVKLVLDGVQTATNSSPTHMSEIFKDLLFKIVDNPINALSSGNYLGILTWAIAGGIALKHCSNEAKQVFIDINEGVLKIVKFIVKLAPFGIFGLVANSVAQTGAQGLLSYVKLLILLVATMLFVTFVINALIVFFYTRKNPFPLIFICLRHSAFFAFFTRSSAANIPVNMALCAKLGIDKEFYGISIPLGATINMAGAAVTIAILSLTAANTVGIEISLLQAFLLSIIATFAACGASGVAGGSLLLIPLACSLFNIDYDIAMKVVAIGFIIGVIQDSVETALNSSTDVLFTAICSKNELNYNIK.

9 helical membrane-spanning segments follow: residues 12 to 32, 42 to 62, 81 to 101, 141 to 161, 179 to 199, 218 to 238, 245 to 267, 288 to 308, and 330 to 350; these read GNLI…GISS, LGIL…FILI, IIIL…LANF, ALSS…GIAL, VLKI…GLVA, ILLV…IVFF, FPLI…SSAA, ISIP…IAIL, and IIAT…LLLI.

The protein belongs to the dicarboxylate/amino acid:cation symporter (DAACS) (TC 2.A.23) family.

Its subcellular location is the cell inner membrane. The catalysed reaction is L-serine(in) + Na(+)(in) = L-serine(out) + Na(+)(out). It carries out the reaction L-threonine(in) + Na(+)(in) = L-threonine(out) + Na(+)(out). Involved in the import of serine and threonine into the cell, with the concomitant import of sodium (symport system). This Campylobacter jejuni subsp. jejuni serotype O:23/36 (strain 81-176) protein is Serine/threonine transporter SstT.